A 288-amino-acid polypeptide reads, in one-letter code: Oxaloacetate decarboxylase (288 aa).

Residue S47 coordinates substrate. D85 is a binding site for Mg(2+). R156 and H232 together coordinate substrate.

Belongs to the isocitrate lyase/PEP mutase superfamily. Oxaloacetate decarboxylase family. As to quaternary structure, homotetramer; dimer of dimers. Mg(2+) is required as a cofactor.

It carries out the reaction oxaloacetate + H(+) = pyruvate + CO2. In terms of biological role, catalyzes the decarboxylation of oxaloacetate into pyruvate. Seems to play a role in maintaining cellular concentrations of bicarbonate and pyruvate. The protein is Oxaloacetate decarboxylase of Bradyrhizobium diazoefficiens (strain JCM 10833 / BCRC 13528 / IAM 13628 / NBRC 14792 / USDA 110).